Consider the following 105-residue polypeptide: MKQQKQKIRIRLKGFDQGQLDRSTADIVETAKRTGARVAGPIPLPTKREVYTVLRSPHVDKKSREQFEIRTHKRLIDILDPTGKTIDALKMLALPAGVDIKIKAA.

This sequence belongs to the universal ribosomal protein uS10 family. In terms of assembly, part of the 30S ribosomal subunit.

Functionally, involved in the binding of tRNA to the ribosomes. The protein is Small ribosomal subunit protein uS10 of Chlamydia abortus (strain DSM 27085 / S26/3) (Chlamydophila abortus).